A 160-amino-acid polypeptide reads, in one-letter code: Small ribosomal subunit protein uS9 (160 aa).

This sequence belongs to the universal ribosomal protein uS9 family.

In Mesorhizobium japonicum (strain LMG 29417 / CECT 9101 / MAFF 303099) (Mesorhizobium loti (strain MAFF 303099)), this protein is Small ribosomal subunit protein uS9.